The sequence spans 261 residues: Cobalt transport protein CbiM (261 aa).

Residues 1–33 (MLRRVLASKRASLILMGMLSFYIIVSASAPAYA) form the signal peptide. Transmembrane regions (helical) follow at residues 41–61 (LPAGWAAFWWLVALPFMLLGV), 76–96 (LLLALAGAFTFVLSALKLPSV), 108–128 (LGSVLFGPLAMSVLGSLVLLF), 140–160 (TLGANAFSMAIAGPFAAYWIY), 172–192 (IAIFLAATLADLLTYIITSVQ), 197–217 (FPAPVGGFIASFAKFAGIFAI), and 220–240 (IPLAISEGLLTVLVWNWLQSY).

The protein belongs to the CbiM family. As to quaternary structure, forms an energy-coupling factor (ECF) transporter complex composed of an ATP-binding protein (A component, CbiO), a transmembrane protein (T component, CbiQ) and 2 possible substrate-capture proteins (S components, CbiM and CbiN) of unknown stoichimetry.

The protein localises to the cell inner membrane. It functions in the pathway cofactor biosynthesis; adenosylcobalamin biosynthesis. Its function is as follows. Part of the energy-coupling factor (ECF) transporter complex CbiMNOQ involved in cobalt import. The chain is Cobalt transport protein CbiM from Nostoc sp. (strain PCC 7120 / SAG 25.82 / UTEX 2576).